The sequence spans 180 residues: ATP-dependent protease subunit HslV (180 aa).

Threonine 7 is a catalytic residue. Na(+) is bound by residues alanine 164, cysteine 167, and threonine 170.

This sequence belongs to the peptidase T1B family. HslV subfamily. As to quaternary structure, a double ring-shaped homohexamer of HslV is capped on each side by a ring-shaped HslU homohexamer. The assembly of the HslU/HslV complex is dependent on binding of ATP.

The protein resides in the cytoplasm. It carries out the reaction ATP-dependent cleavage of peptide bonds with broad specificity.. Its activity is regulated as follows. Allosterically activated by HslU binding. In terms of biological role, protease subunit of a proteasome-like degradation complex believed to be a general protein degrading machinery. The protein is ATP-dependent protease subunit HslV of Brevibacillus brevis (strain 47 / JCM 6285 / NBRC 100599).